The chain runs to 501 residues: Glutamate--tRNA ligase (501 aa).

The 'HIGH' region signature appears at 11-21 (PSPTGPLHIGG). A 'KMSKS' region motif is present at residues 260–264 (KLSKR). ATP is bound at residue K263.

This sequence belongs to the class-I aminoacyl-tRNA synthetase family. Glutamate--tRNA ligase type 1 subfamily. In terms of assembly, monomer.

It is found in the cytoplasm. The enzyme catalyses tRNA(Glu) + L-glutamate + ATP = L-glutamyl-tRNA(Glu) + AMP + diphosphate. In terms of biological role, catalyzes the attachment of glutamate to tRNA(Glu) in a two-step reaction: glutamate is first activated by ATP to form Glu-AMP and then transferred to the acceptor end of tRNA(Glu). In Flavobacterium johnsoniae (strain ATCC 17061 / DSM 2064 / JCM 8514 / BCRC 14874 / CCUG 350202 / NBRC 14942 / NCIMB 11054 / UW101) (Cytophaga johnsonae), this protein is Glutamate--tRNA ligase.